Reading from the N-terminus, the 351-residue chain is MPTKIAVLGAGSWGTVLANLLTENGHEVDLWSHNPDQVALMKRTHQNEHYLGAEFTLQPALHVTADLGQALDQAAVILFVVPTNAIRSVAEQVKPILQAHKGRGEQPIIVHAAKGLERGSELRISQVLAEVLPKELIQGIVVISGPSHAEDVATHDITTLTAASDDLKLAEKVQKLFMNDYFRLYTNTDVIGVEIGAALKNVIAIGAGALHGLGYGDNTKAALMTRGLAEISRVGVKLGAEPLTFIGLSGVGDLIVTCTSVHSRNWRAGNALGKGEKLPDVLKNMGMVVEGVSTTKVAHQMARELDVDMPITDAIYQVLYENAPIRTVITDLMKRSGKPEFDFDNASLQKP.

NADPH contacts are provided by Ser-12, Trp-13, His-33, and Lys-114. Residues Lys-114, Gly-145, and Ser-147 each contribute to the sn-glycerol 3-phosphate site. Position 149 (Ala-149) interacts with NADPH. The sn-glycerol 3-phosphate site is built by Lys-200, Asp-253, Ser-263, Arg-264, and Asn-265. The Proton acceptor role is filled by Lys-200. NADPH is bound at residue Arg-264. 2 residues coordinate NADPH: Val-288 and Glu-290.

This sequence belongs to the NAD-dependent glycerol-3-phosphate dehydrogenase family.

It localises to the cytoplasm. The catalysed reaction is sn-glycerol 3-phosphate + NAD(+) = dihydroxyacetone phosphate + NADH + H(+). It carries out the reaction sn-glycerol 3-phosphate + NADP(+) = dihydroxyacetone phosphate + NADPH + H(+). The protein operates within membrane lipid metabolism; glycerophospholipid metabolism. Its function is as follows. Catalyzes the reduction of the glycolytic intermediate dihydroxyacetone phosphate (DHAP) to sn-glycerol 3-phosphate (G3P), the key precursor for phospholipid synthesis. This Lacticaseibacillus paracasei (strain ATCC 334 / BCRC 17002 / CCUG 31169 / CIP 107868 / KCTC 3260 / NRRL B-441) (Lactobacillus paracasei) protein is Glycerol-3-phosphate dehydrogenase [NAD(P)+].